Reading from the N-terminus, the 379-residue chain is Omega-3 fatty acid desaturase, endoplasmic reticulum (379 aa).

Residues 52 to 72 (LSYVVRDVIFVATLIGIAIHL) form a helical membrane-spanning segment. The short motif at 97–101 (HDCGH) is the Histidine box-1 element. The Histidine box-2 motif lies at 133 to 137 (HKTHH). Helical transmembrane passes span 213–233 (TLCWTVMAALLLYLCTAFGSL) and 236–256 (FKIYGAPYLIFVMWLDFVTYL). The Histidine box-3 motif lies at 300-304 (HVIHH).

It belongs to the fatty acid desaturase type 1 family.

The protein localises to the endoplasmic reticulum membrane. It functions in the pathway lipid metabolism; polyunsaturated fatty acid biosynthesis. Its function is as follows. ER (microsomal) omega-3 fatty acid desaturase introduces the third double bond in the biosynthesis of 18:3 fatty acids, important constituents of plant membranes. It is thought to use cytochrome b5 as an electron donor and to act on fatty acids esterified to phosphatidylcholine and, possibly, other phospholipids. The sequence is that of Omega-3 fatty acid desaturase, endoplasmic reticulum (FAD3) from Nicotiana tabacum (Common tobacco).